Consider the following 120-residue polypeptide: NAD(P)H-quinone oxidoreductase subunit 3, chloroplastic (120 aa).

A run of 3 helical transmembrane segments spans residues F9–G29, M64–M84, and V88–L108.

It belongs to the complex I subunit 3 family. As to quaternary structure, NDH is composed of at least 16 different subunits, 5 of which are encoded in the nucleus.

It localises to the plastid. The protein localises to the chloroplast thylakoid membrane. It catalyses the reaction a plastoquinone + NADH + (n+1) H(+)(in) = a plastoquinol + NAD(+) + n H(+)(out). It carries out the reaction a plastoquinone + NADPH + (n+1) H(+)(in) = a plastoquinol + NADP(+) + n H(+)(out). Its function is as follows. NDH shuttles electrons from NAD(P)H:plastoquinone, via FMN and iron-sulfur (Fe-S) centers, to quinones in the photosynthetic chain and possibly in a chloroplast respiratory chain. The immediate electron acceptor for the enzyme in this species is believed to be plastoquinone. Couples the redox reaction to proton translocation, and thus conserves the redox energy in a proton gradient. The sequence is that of NAD(P)H-quinone oxidoreductase subunit 3, chloroplastic from Atropa belladonna (Belladonna).